The chain runs to 648 residues: Glutenin, high molecular weight subunit DY10 (648 aa).

Residues 1-21 form the signal peptide; the sequence is MAKRLVLFAAVVIALVALTTA. The disordered stretch occupies residues 127-648; sequence YYPGVTSPRQ…EGGDALSASQ (522 aa). 3 stretches are compositionally biased toward low complexity: residues 141–166, 195–236, and 243–263; these read PGQA…QGQQ, QQPG…WQQG, and QQLG…GQQG. Over residues 264-274 the composition is skewed to polar residues; it reads HYPTSLQQPGQ. 5 stretches are compositionally biased toward low complexity: residues 284–353, 360–416, 459–502, 510–523, and 531–565; these read QQQP…GQQG, QQPG…GQQG, QQPG…PGQG, QGYY…PGQG, and QGHC…GQQG. Over residues 578–592 the composition is skewed to gly residues; that stretch reads QQSGQGQQSGQGHQP. The span at 593–604 shows a compositional bias: low complexity; sequence GQGQQSGQEQQG.

It belongs to the gliadin/glutenin family. Disulfide-bridge linked aggregates.

Glutenins are high-molecular weight seed storage proteins of wheat endosperm. Thought to be responsible for the visco-elastic property of wheat dough. This is Glutenin, high molecular weight subunit DY10 (GLU-D1-2B) from Triticum aestivum (Wheat).